The chain runs to 452 residues: Packaging protein 1 (452 aa).

A disordered region spans residues Met1–Leu78. Gly173–Ser180 is an ATP binding site. The segment at Arg442–Gln452 is DNA-binding.

This sequence belongs to the adenoviridae packaging protein 1 family. As to quaternary structure, homodimer. Part of a genome packaging complex composed of packaging proteins 1, 2 and 3; this complex specifically binds to the packaging sequence on the left end of viral genomic DNA and performs packaging of the viral genome. Interacts with protein 33K.

It localises to the virion. Its subcellular location is the host nucleus. It is found in the host nucleoplasm. The protein resides in the host nucleolus. Its function is as follows. Component of the packaging machinery which encapsidates the viral DNA into preformed capsids and transcriptional activator of the viral major late promoter (MLP). Binds, along with packaging proteins 2 and 3, to the specific packaging sequence on the left end of viral genomic DNA and displays ATPase activity thereby providing the power stroke of the packaging machinery. The activity of packaging protein IVa2 is stimulated by protein 33K which acts as a terminase. May be the protein that pumps DNA into the capsid powered by ATP hydrolysis. Specifically binds to the 5'-CG-3' nucleotides of the repeats making up the packaging sequence. Component of the DEF-A and DEF-B transcription factors that bind downstream elements of the major late promoter (MLP), and stimulate transcription from the MLP after initiation of viral DNA replication. DEF-A is a heterodimer packaging proteins 1 and 2 and DEF-B is a homodimer of packaging protein 1. The protein is Packaging protein 1 of Homo sapiens (Human).